A 532-amino-acid chain; its full sequence is Phosphoenolpyruvate carboxykinase (ATP) (532 aa).

Residues R60, Y194, and K200 each coordinate substrate. ATP is bound by residues K200, H219, and 237–245; that span reads GLSGTGKTT. K200 and H219 together coordinate Mn(2+). D258 lines the Mn(2+) pocket. 3 residues coordinate ATP: E286, R324, and T449. R324 is a substrate binding site.

The protein belongs to the phosphoenolpyruvate carboxykinase (ATP) family. It depends on Mn(2+) as a cofactor.

The protein resides in the cytoplasm. It catalyses the reaction oxaloacetate + ATP = phosphoenolpyruvate + ADP + CO2. The protein operates within carbohydrate biosynthesis; gluconeogenesis. Its function is as follows. Involved in the gluconeogenesis. Catalyzes the conversion of oxaloacetate (OAA) to phosphoenolpyruvate (PEP) through direct phosphoryl transfer between the nucleoside triphosphate and OAA. The chain is Phosphoenolpyruvate carboxykinase (ATP) from Ruegeria sp. (strain TM1040) (Silicibacter sp.).